The chain runs to 103 residues: Carboxysome shell protein CsoS1 (103 aa).

The 86-residue stretch at 9-94 (ALGMIETRGL…PHREVEPALG (86 aa)) folds into the BMC domain.

The protein belongs to the bacterial microcompartments protein family. CsoS1 subfamily. In terms of assembly, homohexamer with a small central pore. Forms a CsoS2-CsoS1-RuBisCO complex.

The protein resides in the carboxysome. Functionally, one of the shell proteins of the carboxysome, a polyhedral inclusion where RuBisCO (ribulose bisphosphate carboxylase, ccbL-ccbS) is sequestered. Assembles into hexamers which make sheets that form the facets of the polyhedral carboxysome. The chain is Carboxysome shell protein CsoS1 from Prochlorococcus marinus (strain MIT 9313).